Reading from the N-terminus, the 151-residue chain is Large ribosomal subunit protein uL22 (151 aa).

The protein belongs to the universal ribosomal protein uL22 family. As to quaternary structure, part of the 50S ribosomal subunit.

This protein binds specifically to 23S rRNA. It makes multiple contacts with different domains of the 23S rRNA in the assembled 50S subunit and ribosome. In terms of biological role, the globular domain of the protein is located near the polypeptide exit tunnel on the outside of the subunit, while an extended beta-hairpin is found that lines the wall of the exit tunnel in the center of the 70S ribosome. This Methanococcoides burtonii (strain DSM 6242 / NBRC 107633 / OCM 468 / ACE-M) protein is Large ribosomal subunit protein uL22.